The primary structure comprises 112 residues: Large ribosomal subunit protein uL22 (112 aa).

It belongs to the universal ribosomal protein uL22 family. As to quaternary structure, part of the 50S ribosomal subunit.

This protein binds specifically to 23S rRNA; its binding is stimulated by other ribosomal proteins, e.g. L4, L17, and L20. It is important during the early stages of 50S assembly. It makes multiple contacts with different domains of the 23S rRNA in the assembled 50S subunit and ribosome. Functionally, the globular domain of the protein is located near the polypeptide exit tunnel on the outside of the subunit, while an extended beta-hairpin is found that lines the wall of the exit tunnel in the center of the 70S ribosome. In Anaplasma phagocytophilum (strain HZ), this protein is Large ribosomal subunit protein uL22.